The chain runs to 216 residues: Probable flavin-dependent thymidylate synthase (216 aa).

Residues 1-216 (MSAKLISVTK…PSIAKALDWV (216 aa)) form the ThyX domain. FAD is bound by residues Ser55, 78 to 80 (RHR), and Glu86. DUMP contacts are provided by residues 75–78 (QVLR), 86–90 (EFSQR), and Arg155. The ThyX motif signature appears at 78 to 88 (RHRSFHFQEFS). His177 provides a ligand contact to FAD. A dUMP-binding site is contributed by Arg182. Arg182 (involved in ionization of N3 of dUMP, leading to its activation) is an active-site residue.

It belongs to the thymidylate synthase ThyX family. In terms of assembly, homotetramer. FAD is required as a cofactor.

The enzyme catalyses dUMP + (6R)-5,10-methylene-5,6,7,8-tetrahydrofolate + NADPH + H(+) = dTMP + (6S)-5,6,7,8-tetrahydrofolate + NADP(+). The protein operates within pyrimidine metabolism; dTTP biosynthesis. Catalyzes the reductive methylation of 2'-deoxyuridine-5'-monophosphate (dUMP) to 2'-deoxythymidine-5'-monophosphate (dTMP) while utilizing 5,10-methylenetetrahydrofolate (mTHF) as the methyl donor, and NADPH and FADH(2) as the reductant. This chain is Probable flavin-dependent thymidylate synthase, found in Paramecium bursaria Chlorella virus 1 (PBCV-1).